The following is a 574-amino-acid chain: Galactose transporter (574 aa).

A disordered region spans residues 1–57 (MAVEENNMPVVSQQPQAGEDVISSLSKDSHLSAQSQKYSNDELKAGESGSEGSQSVP). Over 1-70 (MAVEENNMPV…PKKPMSEYVT (70 aa)) the chain is Cytoplasmic. Polar residues predominate over residues 23–38 (SSLSKDSHLSAQSQKY). Residues Ser-32, Ser-35, Ser-39, Ser-48, Ser-50, Ser-53, and Ser-55 each carry the phosphoserine modification. The helical transmembrane segment at 71–91 (VSLLCLCVAFGGFMFGWDTGT) threads the bilayer. The Extracellular portion of the chain corresponds to 92–121 (ISGFVVQTDFLRRFGMKHKDGTHYLSNVRT). A helical membrane pass occupies residues 122 to 142 (GLIVAIFNIGCAFGGIILSKG). At 143–149 (GDMYGRK) the chain is on the cytoplasmic side. Residues 150–170 (KGLSIVVSVYIVGIIIQIASI) traverse the membrane as a helical segment. At 171 to 175 (NKWYQ) the chain is on the extracellular side. The chain crosses the membrane as a helical span at residues 176–196 (YFIGRIISGLGVGGIAVLCPM). Residues 197-207 (LISEIAPKHLR) are Cytoplasmic-facing. A helical transmembrane segment spans residues 208-228 (GTLVSCYQLMITAGIFLGYCT). The Extracellular segment spans residues 229 to 242 (NYGTKSYSNSVQWR). Residues 243–263 (VPLGLCFAWSLFMIGALTLVP) traverse the membrane as a helical segment. The Cytoplasmic portion of the chain corresponds to 264–342 (ESPRYLCEVN…MGVFVQMFQQ (79 aa)). The chain crosses the membrane as a helical span at residues 343–362 (LTGNNYFFYYGTVIFKSVGL). The Extracellular portion of the chain corresponds to 363 to 366 (DDSF). A helical membrane pass occupies residues 367–387 (ETSIVIGVVNFASTFFSLWTV). Over 388–394 (ENLGHRK) the chain is Cytoplasmic. The helical transmembrane segment at 395 to 415 (CLLLGAATMMACMVIYASVGV) threads the bilayer. The Extracellular portion of the chain corresponds to 416–435 (TRLYPHGKSQPSSKGAGNCM). The helical transmembrane segment at 436-456 (IVFTCFYIFCYATTWAPVAWV) threads the bilayer. Residues 457–472 (ITAESFPLRVKSKCMA) lie on the Cytoplasmic side of the membrane. The chain crosses the membrane as a helical span at residues 473–493 (LASASNWVWGFLIAFFTPFIT). Topologically, residues 494–499 (SAINFY) are extracellular. Residues 500–520 (YGYVFMGCLVAMFFYVFFFVP) traverse the membrane as a helical segment. The Cytoplasmic segment spans residues 521 to 574 (ETKGLSLEEIQELWEEGVLPWKSEGWIPSSRRGNNYDLEDLQHDDKPWYKAMLE).

This sequence belongs to the major facilitator superfamily. Sugar transporter (TC 2.A.1.1) family.

It is found in the membrane. GAL2 is a facilitated diffusion transporter required for both the high-affinity galactokinase-dependent and low-affinity galactokinase-independent galactose transport processes. This Saccharomyces cerevisiae (strain ATCC 204508 / S288c) (Baker's yeast) protein is Galactose transporter (GAL2).